Here is a 118-residue protein sequence, read N- to C-terminus: Large ribosomal subunit protein bL19 (118 aa).

This sequence belongs to the bacterial ribosomal protein bL19 family.

This protein is located at the 30S-50S ribosomal subunit interface and may play a role in the structure and function of the aminoacyl-tRNA binding site. This chain is Large ribosomal subunit protein bL19, found in Onion yellows phytoplasma (strain OY-M).